The primary structure comprises 156 residues: MGRSISVSFGLLVVFLSLSGTGADQDCLPGWSSHEGHCYKVFNLDKTWEDAEKFCTEQANSGHLVSIDSKKEANFVAELVSQNIKETRRTDFVWIGLRAEDKRQHCSSEWSDGSSINYQNWIEAESKKCLGLEKQTRYRKWVNLNCGQPYRFTCEI.

A signal peptide spans 1-23 (MGRSISVSFGLLVVFLSLSGTGA). 3 disulfide bridges follow: Cys27–Cys38, Cys55–Cys154, and Cys129–Cys146. One can recognise a C-type lectin domain in the interval 34-155 (HEGHCYKVFN…CGQPYRFTCE (122 aa)).

It belongs to the snaclec family. In terms of assembly, heterodimer; disulfide-linked. As to expression, expressed by the venom gland.

Its subcellular location is the secreted. Its function is as follows. Interferes with one step of hemostasis (modulation of platelet aggregation, or coagulation cascade, for example). This Macrovipera lebetinus (Levantine viper) protein is Snaclec A1.